The following is a 484-amino-acid chain: Arginyl-tRNA--protein transferase 1 (484 aa).

Belongs to the R-transferase family.

The enzyme catalyses an N-terminal L-alpha-aminoacyl-[protein] + L-arginyl-tRNA(Arg) = an N-terminal L-arginyl-L-aminoacyl-[protein] + tRNA(Arg) + H(+). In terms of biological role, involved in the post-translational conjugation of arginine to the N-terminal aspartate or glutamate of a protein. This arginylation is required for degradation of the protein via the ubiquitin pathway. Does not arginylate cysteine residues. The protein is Arginyl-tRNA--protein transferase 1 (Ate1) of Drosophila melanogaster (Fruit fly).